A 280-amino-acid polypeptide reads, in one-letter code: 2-dehydro-3-deoxyphosphooctonate aldolase (280 aa).

The protein belongs to the KdsA family.

The protein resides in the cytoplasm. It catalyses the reaction D-arabinose 5-phosphate + phosphoenolpyruvate + H2O = 3-deoxy-alpha-D-manno-2-octulosonate-8-phosphate + phosphate. It participates in carbohydrate biosynthesis; 3-deoxy-D-manno-octulosonate biosynthesis; 3-deoxy-D-manno-octulosonate from D-ribulose 5-phosphate: step 2/3. The protein operates within bacterial outer membrane biogenesis; lipopolysaccharide biosynthesis. The polypeptide is 2-dehydro-3-deoxyphosphooctonate aldolase (Neisseria gonorrhoeae (strain NCCP11945)).